We begin with the raw amino-acid sequence, 185 residues long: dTTP/UTP pyrophosphatase (185 aa).

Asp64 serves as the catalytic Proton acceptor.

Belongs to the Maf family. YhdE subfamily. A divalent metal cation serves as cofactor.

The protein localises to the cytoplasm. The catalysed reaction is dTTP + H2O = dTMP + diphosphate + H(+). It carries out the reaction UTP + H2O = UMP + diphosphate + H(+). Functionally, nucleoside triphosphate pyrophosphatase that hydrolyzes dTTP and UTP. May have a dual role in cell division arrest and in preventing the incorporation of modified nucleotides into cellular nucleic acids. In Leptospira borgpetersenii serovar Hardjo-bovis (strain JB197), this protein is dTTP/UTP pyrophosphatase.